An 805-amino-acid chain; its full sequence is Polyribonucleotide nucleotidyltransferase (805 aa).

The Mg(2+) site is built by D491 and D497. Residues 558–617 enclose the KH domain; that stretch reads PRMESMIIDKNKIKNVIGTGGKNVREICEKTGVKIEISQDGTVMIYAVSRDAVEEAKNMI. In terms of domain architecture, S1 motif spans 627 to 694; that stretch reads GKVFSGVISE…DKDHVQLSMR (68 aa). The disordered stretch occupies residues 702-805; that stretch reads DLLEHESYSS…GGGNKKPRFF (104 aa). Over residues 709–721 the composition is skewed to polar residues; the sequence is YSSSKKNGPQSGD.

This sequence belongs to the polyribonucleotide nucleotidyltransferase family. Mg(2+) serves as cofactor.

It is found in the cytoplasm. The catalysed reaction is RNA(n+1) + phosphate = RNA(n) + a ribonucleoside 5'-diphosphate. In terms of biological role, involved in mRNA degradation. Catalyzes the phosphorolysis of single-stranded polyribonucleotides processively in the 3'- to 5'-direction. This chain is Polyribonucleotide nucleotidyltransferase, found in Anaplasma marginale (strain St. Maries).